We begin with the raw amino-acid sequence, 1519 residues long: MEMETKAGKQKKRSVDSDDDVSKERRPKRAAACTNFKEKSLRISDKSETVEAKKEQILAEEIVAIQLTSSLESNDDPRPNRRLTDFVLHDSEGVPQPVEMLELGDIFIEGVVLPLGDEKKEEKGVRFQSFGRVENWNISGYEDGSPVIWISTALADYDCRKPSKKYKKLYDYFFEKACACVEVFKSLSKNPDTSLDELLAAVSRSMSGSKIFSSGGAIQEFVISQGEFIYNQLAGLDETAKNHETCFVENRVLVSLRDHESNKIHKALSNVALRIDESKVVTSDHLVDGAEDEDVKYAKLIQEEEYRKSMERSRNKRSSTTSGGSSRFYIKISEDEIADDYPLPSYYKNTKEETDELVLFEAGYEVDTRDLPCRTLHNWTLYNSDSRMISLEVLPMRPCAEIDVTVFGSGVVAEDDGSGFCLDDSESSTSTQSNDHDGMNIFLSQIKEWMIEFGAEMIFVTLRTDMAWYRLGKPSKQYAPWFGTVMKTVRVGISIFNMLMRESRVAKLSYANVIKRLCGLEENDKAYISSKLLDVERYVVVHGQIILQLFEEYPDKDIKRCPFVTSLASKMQDIHHTKWIIKKKKKILQKGKNLNPRAGIAPVVSRMKAMQATTTRLVNRIWGEFYSIYSPEVPSEAINAENVEEEELEEVEEEDENEEDDPEENELEAVEIQNSPTPKKIKGISEDMEIKWDGEILGKTSAGEPLYGRAFVGGDVVVVGSAVILEVDDQDDTQLICFVEFMFESSNHSKMLHGKLLQRGSETVLGMAANERELFLTNECLTVQLKDIKGTVSLEIRSRLWGHQYRKENIDVDKLDRARAEERKTNGLPTDYYCKSLYSPERGGFFSLPRNDMGLGSGFCSSCKIRENEEERSKTKLNDSKTGFLSNGIEYHNGDFVYVLPNYITKDGLKKGSRRTTLKCGRNVGLKAFVVCQLLDVIVLEESRKASKASFQVKLTRFYRPEDISEEKAYASDIQELYYSQDTYILPPEAIQGKCEVRKKSDMPLCREYPILDHIFFCEVFYDSSTGYLKQFPANMKLKFSTIKDETLLREKKGKGVETGTSSGMLMKPDEVPKEKPLATLDIFAGCGGLSHGLENAGVSTTKWAIEYEEPAGHAFKQNHPEATVFVDNCNVILRAIMEKCGDVDDCVSTVEAAELAAKLDENQKSTLPLPGQVDFINGGPPCQGFSGMNRFSHGSWSKVQCEMILAFLSFADYFRPKYFLLENVKKFVTYNKGRTFQLTMASLLEMGYQVRFGILEAGTYGVSQPRKRVIIWAASPEEVLPEWPEPMHVFDNPGSKISLPRGLRYDAGCNTKFGAPFRSITVRDTIGDLPPVENGESKINKEYGTTPASWFQKKIRGNMSVLTDHICKGLNELNLIRCKKIPKRPGADWRDLPDENVTLSNGLVEKLRPLALSKTAKNHNEWKGLYGRLDWQGNLPISITDPQPMGKVGMCFHPEQDRIITVRECARSQGFPDSYEFSGTTKHKHRQIGNAVPPPLAFALGRKLKEALYLKSSLQHQS.

The segment covering 1–24 has biased composition (basic and acidic residues); the sequence is MEMETKAGKQKKRSVDSDDDVSKE. The segment at 1-31 is disordered; sequence MEMETKAGKQKKRSVDSDDDVSKERRPKRAA. Residue K583 forms a Glycyl lysine isopeptide (Lys-Gly) (interchain with G-Cter in ubiquitin) linkage. The disordered stretch occupies residues 641–668; that stretch reads ENVEEEELEEVEEEDENEEDDPEENELE. The segment covering 642–668 has biased composition (acidic residues); it reads NVEEEELEEVEEEDENEEDDPEENELE. 2 consecutive BAH domains span residues 715–849 and 916–1033; these read DVVV…FSLP and TTLK…KQFP. The 435-residue stretch at 1078–1512 folds into the SAM-dependent MTase C5-type domain; the sequence is LATLDIFAGC…RKLKEALYLK (435 aa). The active site involves C1183.

Belongs to the class I-like SAM-binding methyltransferase superfamily. C5-methyltransferase family. Expressed at low levels in vegetative and floral organs.

It is found in the nucleus. It catalyses the reaction a 2'-deoxycytidine in DNA + S-adenosyl-L-methionine = a 5-methyl-2'-deoxycytidine in DNA + S-adenosyl-L-homocysteine + H(+). In terms of biological role, maintains chromatin CpG methylation that plays a role in genomic imprinting, regulation of embryogenesis and seed viability. Required for proper patterns of CG DNA methylation in dividing cells. In Arabidopsis thaliana (Mouse-ear cress), this protein is DNA (cytosine-5)-methyltransferase 4 (MET4).